Reading from the N-terminus, the 226-residue chain is Movement and silencing protein TGBp1 (226 aa).

The region spanning 1–115 (MDILIISLKS…EFSLEPHFYL (115 aa)) is the (+)RNA virus helicase ATP-binding domain. One can recognise a (+)RNA virus helicase C-terminal domain in the interval 116–226 (ETSFRVPRKV…KGLTYVRAGT (111 aa)).

Belongs to the Tymovirales TGBp1 protein family. Homodimer and homooligomer. Interacts with capsid protein. Interacts with host AGO1; this interaction targets the host protein for degradation, thereby suppressing the antiviral RNA silencing.

It is found in the host cytoplasm. In terms of biological role, transports viral genome to neighboring plant cells directly through plasmosdesmata, without any budding. The movement protein allows efficient cell to cell propagation, by bypassing the host cell wall barrier. Increases plasmodesma size exclusion limit. Acts as a suppressor of RNA-mediated gene silencing, also known as post-transcriptional gene silencing (PTGS), a mechanism of plant viral defense that limits the accumulation of viral RNAs. The sequence is that of Movement and silencing protein TGBp1 from Brassica campestris (Field mustard).